A 159-amino-acid polypeptide reads, in one-letter code: Succinate dehydrogenase [ubiquinone] cytochrome b small subunit, mitochondrial (159 aa).

The N-terminal 36 residues, 1 to 36 (MATLWRLSVLCGARGGGALVLRTSVVRPAHVSAFLQ), are a transit peptide targeting the mitochondrion. The Mitochondrial matrix segment spans residues 37–63 (DRHTPGWCGVQHIHLSPSHQASSKAAS). The chain crosses the membrane as a helical span at residues 64–85 (LHWTGERVVSVLLLGLLPAAYL). At 86-90 (NPCSA) the chain is on the mitochondrial intermembrane side. A helical transmembrane segment spans residues 91–111 (MDYSLAAALTLHGHWGIGQVV). Residue His-102 participates in heme b binding. Topologically, residues 112-120 (TDYVRGDAL) are mitochondrial matrix. A ubiquinone is bound at residue Tyr-114. A helical membrane pass occupies residues 121–142 (QKVAKAGLLALSAFTFAGLCYF). At 143-159 (NYHDVGICKAVAMLWKL) the chain is on the mitochondrial intermembrane side.

It belongs to the CybS family. In terms of assembly, component of complex II composed of four subunits: the flavoprotein (FP) SDHA, iron-sulfur protein (IP) SDHB, and a cytochrome b560 composed of SDHC and SDHD.

Its subcellular location is the mitochondrion inner membrane. Its pathway is carbohydrate metabolism; tricarboxylic acid cycle. Its function is as follows. Membrane-anchoring subunit of succinate dehydrogenase (SDH) that is involved in complex II of the mitochondrial electron transport chain and is responsible for transferring electrons from succinate to ubiquinone (coenzyme Q). SDH also oxidizes malate to the non-canonical enol form of oxaloacetate, enol-oxaloacetate. Enol-oxaloacetate, which is a potent inhibitor of the succinate dehydrogenase activity, is further isomerized into keto-oxaloacetate. The protein is Succinate dehydrogenase [ubiquinone] cytochrome b small subunit, mitochondrial (SDHD) of Sus scrofa (Pig).